Reading from the N-terminus, the 237-residue chain is Sugar fermentation stimulation protein homolog (237 aa).

The protein belongs to the SfsA family.

In Pseudomonas syringae pv. tomato (strain ATCC BAA-871 / DC3000), this protein is Sugar fermentation stimulation protein homolog.